A 122-amino-acid chain; its full sequence is Large ribosomal subunit protein uL14 (122 aa).

The protein belongs to the universal ribosomal protein uL14 family. As to quaternary structure, part of the 50S ribosomal subunit. Forms a cluster with proteins L3 and L19. In the 70S ribosome, L14 and L19 interact and together make contacts with the 16S rRNA in bridges B5 and B8.

In terms of biological role, binds to 23S rRNA. Forms part of two intersubunit bridges in the 70S ribosome. The protein is Large ribosomal subunit protein uL14 of Bacillus anthracis (strain A0248).